The chain runs to 457 residues: F-box only protein 13 (457 aa).

One can recognise an F-box domain in the interval 64-110 (EFPMDDLNDDVLERVLSWLPTSCFFRMSSVCKRWKSSQTSKSFKLAC).

The protein is F-box only protein 13 (FBX13) of Arabidopsis thaliana (Mouse-ear cress).